The sequence spans 355 residues: 45 kDa calcium-binding protein (355 aa).

Positions M1 to A29 are cleaved as a signal peptide. The N-linked (GlcNAc...) asparagine glycan is linked to N26. EF-hand domains are found at residues K91–E126 and E130–H165. Residue S92 is modified to Phosphoserine. Ca(2+) contacts are provided by D104, N106, D108, R110, E115, D143, D145, D147, H149, and E154. A phosphothreonine mark is found at T186 and T210. EF-hand domains lie at M226 to N261, W271 to F306, and S307 to S342. Ca(2+) is bound by residues D239, D241, D243, K245, and E250. A Phosphothreonine modification is found at T258. D284, N286, and D288 together coordinate Ca(2+). T292 carries the phosphothreonine modification. 6 residues coordinate Ca(2+): E295, D320, N322, N324, Y326, and E331. The tract at residues P302–F355 is necessary for intracellular retention in Golgi apparatus lumen.

The protein belongs to the CREC family.

The protein localises to the golgi apparatus lumen. Functionally, may regulate calcium-dependent activities in the endoplasmic reticulum lumen or post-ER compartment. The polypeptide is 45 kDa calcium-binding protein (SDF4) (Capra hircus (Goat)).